Consider the following 287-residue polypeptide: Shikimate dehydrogenase (NADP(+)) (287 aa).

Shikimate is bound by residues 20–22 and threonine 67; that span reads SRS. Residue lysine 71 is the Proton acceptor of the active site. Glutamate 84 contributes to the NADP(+) binding site. Shikimate-binding residues include asparagine 93 and aspartate 108. Residues 132–136, 156–161, and methionine 226 contribute to the NADP(+) site; these read GAGGA and NRTAAR. Tyrosine 228 contacts shikimate. An NADP(+)-binding site is contributed by glycine 250.

Belongs to the shikimate dehydrogenase family. As to quaternary structure, homodimer.

The enzyme catalyses shikimate + NADP(+) = 3-dehydroshikimate + NADPH + H(+). It functions in the pathway metabolic intermediate biosynthesis; chorismate biosynthesis; chorismate from D-erythrose 4-phosphate and phosphoenolpyruvate: step 4/7. Its function is as follows. Involved in the biosynthesis of the chorismate, which leads to the biosynthesis of aromatic amino acids. Catalyzes the reversible NADPH linked reduction of 3-dehydroshikimate (DHSA) to yield shikimate (SA). This chain is Shikimate dehydrogenase (NADP(+)), found in Bordetella parapertussis (strain 12822 / ATCC BAA-587 / NCTC 13253).